Consider the following 77-residue polypeptide: MNQIHLKCHSDKICPKGYFGLNADPYDCTAYYLCPHKVQMFCELNHEFDLDSASCKPIVYDHTGSGCTARMYRNLLL.

Its subcellular location is the host nucleus. The protein localises to the virion. In terms of biological role, plays a role in primary oral infection of the host. This chain is Protein AC145, found in Autographa californica nuclear polyhedrosis virus (AcMNPV).